The primary structure comprises 213 residues: 3-demethoxyubiquinol 3-hydroxylase (213 aa).

Positions 62, 92, 95, 144, 176, and 179 each coordinate Fe cation.

This sequence belongs to the COQ7 family. Fe cation serves as cofactor.

The protein resides in the cell membrane. The catalysed reaction is a 5-methoxy-2-methyl-3-(all-trans-polyprenyl)benzene-1,4-diol + AH2 + O2 = a 3-demethylubiquinol + A + H2O. It functions in the pathway cofactor biosynthesis; ubiquinone biosynthesis. Its function is as follows. Catalyzes the hydroxylation of 2-nonaprenyl-3-methyl-6-methoxy-1,4-benzoquinol during ubiquinone biosynthesis. The protein is 3-demethoxyubiquinol 3-hydroxylase of Legionella pneumophila (strain Corby).